The following is a 339-amino-acid chain: Diacylglycerol acyltransferase/mycolyltransferase Ag85A (339 aa).

A signal peptide spans 1 to 43; the sequence is MKLVDRFRGAVTGMPRRLMVGAVGAALLSGLVGFVGGSATASA. 85–86 contacts substrate; that stretch reads MR. Positions 101 to 111 are fibronectin-binding; the sequence is FEWYNQSGISV. Cys130 and Cys135 are oxidised to a cystine. Ser169 and Asp197 together coordinate substrate. Residue Ser169 is the Nucleophile of the active site. The active site involves Glu272. Substrate contacts are provided by residues 274–277, Lys281, and 304–306; these read FVRT and HDW. Residue His304 is part of the active site.

Belongs to the mycobacterial A85 antigen family. In terms of assembly, homodimer.

It localises to the secreted. The protein resides in the cell wall. It is found in the cytoplasm. It catalyses the reaction an acyl-CoA + a 1,2-diacyl-sn-glycerol = a triacyl-sn-glycerol + CoA. It carries out the reaction 2 alpha,alpha'-trehalose 6-mycolate = alpha,alpha'-trehalose 6,6'-bismycolate + alpha,alpha-trehalose. Its function is as follows. The antigen 85 proteins (FbpA, FbpB, FbpC) are responsible for the high affinity of mycobacteria for fibronectin, a large adhesive glycoprotein, which facilitates the attachment of M.tuberculosis to murine alveolar macrophages (AMs). They also help to maintain the integrity of the cell wall by catalyzing the transfer of mycolic acids to cell wall arabinogalactan, and through the synthesis of alpha,alpha-trehalose dimycolate (TDM, cord factor). They catalyze the transfer of a mycoloyl residue from one molecule of alpha,alpha-trehalose monomycolate (TMM) to another TMM, leading to the formation of TDM. FbpA mediates triacylglycerol (TAG) formation with long-chain acyl-CoA as the acyl donor and 1,2-dipalmitoyl-sn-glycerol (1,2-dipalmitin) as the acyl acceptor. It has a preference for C26:0-CoA over C18:1-CoA. The sequence is that of Diacylglycerol acyltransferase/mycolyltransferase Ag85A (fbpA) from Mycobacterium gordonae.